Here is a 297-residue protein sequence, read N- to C-terminus: Nucleotide-binding protein BURPS668_0577 (297 aa).

8–15 (GISGSGKS) contributes to the ATP binding site. 57–60 (DARS) is a GTP binding site.

This sequence belongs to the RapZ-like family.

Displays ATPase and GTPase activities. In Burkholderia pseudomallei (strain 668), this protein is Nucleotide-binding protein BURPS668_0577.